Reading from the N-terminus, the 505-residue chain is Maturase K (505 aa).

It belongs to the intron maturase 2 family. MatK subfamily.

It is found in the plastid. It localises to the chloroplast. Its function is as follows. Usually encoded in the trnK tRNA gene intron. Probably assists in splicing its own and other chloroplast group II introns. The polypeptide is Maturase K (Calycanthus floridus (Eastern sweetshrub)).